The sequence spans 389 residues: 5-hydroxytryptamine receptor 1B (389 aa).

Residues 1–27 (MEETNTHCAPPPPAGSQTGVSQANLSS) are disordered. Over 1–45 (MEETNTHCAPPPPAGSQTGVSQANLSSAPPNCSTEGYIYQDSIAL) the chain is Extracellular. The span at 15–27 (GSQTGVSQANLSS) shows a compositional bias: polar residues. 2 N-linked (GlcNAc...) asparagine glycosylation sites follow: Asn-24 and Asn-31. The helical transmembrane segment at 46 to 71 (PWKVLLILVLALFTLATTLSNAFVIA) threads the bilayer. Topologically, residues 72-85 (TVYRTRKLHTPANY) are cytoplasmic. Residues 86–110 (LIASLAVTDLLVSILVMPISTMYTV) traverse the membrane as a helical segment. The Extracellular segment spans residues 111–118 (TGRWTLGQ). Residues 119-144 (VVCDFWLSSDITCCTASILHLCVIAL) traverse the membrane as a helical segment. The cysteines at positions 121 and 198 are disulfide-linked. Residues Asp-128 and Thr-133 each contribute to the ergotamine site. The short motif at 145–147 (DRY) is the DRY motif; important for ligand-induced conformation changes and signaling element. Topologically, residues 145–164 (DRYWAITDAVEYSAKRTPKR) are cytoplasmic. Residues 165–183 (AAVMIALVWVFSISISLPP) form a helical membrane-spanning segment. The Extracellular portion of the chain corresponds to 184 to 204 (FFWRQAKAEEEVSDCRVNTDH). Val-200 is an ergotamine binding site. A helical transmembrane segment spans residues 205 to 228 (MLYTVYSTVGAFYFPTLLLIALYG). Topologically, residues 229–314 (RIYVEARSRI…AARERKATKT (86 aa)) are cytoplasmic. A compositionally biased stretch (polar residues) spans 258–271 (DSPGSTSSVTSVNS). A disordered region spans residues 258 to 281 (DSPGSTSSVTSVNSRAPDVPSESG). A helical membrane pass occupies residues 315 to 336 (LGIILGAFIVCWLPFFIISLVM). Over 337 to 346 (PICKDACWFH) the chain is Extracellular. A helical transmembrane segment spans residues 347 to 369 (LAIFDFFTWLGYLNSLINPIIYT). The NPxxY motif; important for ligand-induced conformation changes and signaling signature appears at 364–368 (NPIIY). The Cytoplasmic segment spans residues 370 to 389 (MSNEDFKQAFHKLIRFKCTG). Cys-387 carries the S-palmitoyl cysteine lipid modification.

This sequence belongs to the G-protein coupled receptor 1 family. Homodimer. Heterodimer with HTR1D. Phosphorylated. Desensitization of the receptor may be mediated by its phosphorylation. In terms of processing, palmitoylated.

The protein localises to the cell membrane. In terms of biological role, G-protein coupled receptor for 5-hydroxytryptamine (serotonin). Also functions as a receptor for ergot alkaloid derivatives, various anxiolytic and antidepressant drugs and other psychoactive substances, such as lysergic acid diethylamide (LSD). Ligand binding causes a conformation change that triggers signaling via guanine nucleotide-binding proteins (G proteins) and modulates the activity of downstream effectors, such as adenylate cyclase. HTR1B is coupled to G(i)/G(o) G alpha proteins and mediates inhibitory neurotransmission by inhibiting adenylate cyclase activity. Arrestin family members inhibit signaling via G proteins and mediate activation of alternative signaling pathways. Regulates the release of 5-hydroxytryptamine, dopamine and acetylcholine in the brain, and thereby affects neural activity, nociceptive processing, pain perception, mood and behavior. Besides, plays a role in vasoconstriction of cerebral arteries. This chain is 5-hydroxytryptamine receptor 1B (HTR1B), found in Felis catus (Cat).